A 333-amino-acid chain; its full sequence is F420-dependent glucose-6-phosphate dehydrogenase (333 aa).

Aspartate 37 is a binding site for coenzyme F420-(gamma-Glu)n. The active-site Proton donor is histidine 38. Residues threonine 74 and 105–106 each bind coenzyme F420-(gamma-Glu)n; that span reads SG. Glutamate 107 acts as the Proton acceptor in catalysis. Coenzyme F420-(gamma-Glu)n contacts are provided by residues asparagine 110, 174 to 175, and 177 to 178; these read GG and VV. Residues threonine 192, lysine 195, lysine 256, and arginine 280 each contribute to the substrate site.

This sequence belongs to the F420-dependent glucose-6-phosphate dehydrogenase family. Homodimer.

The enzyme catalyses oxidized coenzyme F420-(gamma-L-Glu)(n) + D-glucose 6-phosphate + H(+) = 6-phospho-D-glucono-1,5-lactone + reduced coenzyme F420-(gamma-L-Glu)(n). Its function is as follows. Catalyzes the coenzyme F420-dependent oxidation of glucose 6-phosphate (G6P) to 6-phosphogluconolactone. The chain is F420-dependent glucose-6-phosphate dehydrogenase from Amycolatopsis mediterranei (strain U-32).